The chain runs to 46 residues: Denclatoxin-B (46 aa).

3 disulfide bridges follow: Cys3/Cys40, Cys4/Cys32, and Cys16/Cys26.

Belongs to the plant thionin (TC 1.C.44) family.

The protein localises to the secreted. Functionally, thionins are small plant proteins which are toxic to animal cells. They seem to exert their toxic effect at the level of the cell membrane. Their precise function is not known. This chain is Denclatoxin-B, found in Dendrophthora clavata (Columbian mistletoe).